A 188-amino-acid chain; its full sequence is UPF0340 protein GK3370 (188 aa).

The protein belongs to the UPF0340 family.

This Geobacillus kaustophilus (strain HTA426) protein is UPF0340 protein GK3370.